Here is a 117-residue protein sequence, read N- to C-terminus: uncharacterized protein (117 aa).

The segment covering 1–12 (MAQNSVSLSAGD) has biased composition (polar residues). Disordered regions lie at residues 1-30 (MAQNSVSLSAGDQANRMAHRSSQGDLNPSA) and 43-87 (VTRL…SPYP).

This is an uncharacterized protein from Mus musculus (Mouse).